The sequence spans 501 residues: Cytoplasmic tRNA 2-thiolation protein 2 (501 aa).

The segment covering 1 to 12 has biased composition (basic and acidic residues); that stretch reads MCEMSEEYRESA. Disordered regions lie at residues 1–23 and 192–214; these read MCEMSEEYRESAPKGPPPPRLGT and GVERQSQHCAQDPQSPTGPPTTA. Residue Cys2 is modified to N-acetylcysteine. Position 492 is a phosphoserine (Ser492).

It belongs to the CTU2/NCS2 family. In terms of assembly, component of a complex at least composed of URM1, CTU2/NCS2 and CTU1/ATPBD3.

It localises to the cytoplasm. It participates in tRNA modification; 5-methoxycarbonylmethyl-2-thiouridine-tRNA biosynthesis. Plays a central role in 2-thiolation of mcm(5)S(2)U at tRNA wobble positions of tRNA(Lys), tRNA(Glu) and tRNA(Gln). May act by forming a heterodimer with CTU1/ATPBD3 that ligates sulfur from thiocarboxylated URM1 onto the uridine of tRNAs at wobble position. In Bos taurus (Bovine), this protein is Cytoplasmic tRNA 2-thiolation protein 2.